The chain runs to 100 residues: Urease subunit gamma (100 aa).

Belongs to the urease gamma subunit family. In terms of assembly, heterotrimer of UreA (gamma), UreB (beta) and UreC (alpha) subunits. Three heterotrimers associate to form the active enzyme.

The protein resides in the cytoplasm. It catalyses the reaction urea + 2 H2O + H(+) = hydrogencarbonate + 2 NH4(+). The protein operates within nitrogen metabolism; urea degradation; CO(2) and NH(3) from urea (urease route): step 1/1. This is Urease subunit gamma from Saccharophagus degradans (strain 2-40 / ATCC 43961 / DSM 17024).